The following is a 99-amino-acid chain: uncharacterized protein (99 aa).

Residues Glu10–Gly29 traverse the membrane as a helical segment.

Its subcellular location is the membrane. This is an uncharacterized protein from Schizosaccharomyces pombe (strain 972 / ATCC 24843) (Fission yeast).